Consider the following 1483-residue polypeptide: Rho GTPase-activating protein 23 (1483 aa).

The tract at residues P15–R34 is disordered. The PDZ domain occupies H71–D155. Disordered stretches follow at residues I212–R276 and A300–G345. The span at S316–T325 shows a compositional bias: basic and acidic residues. The span at C331–G342 shows a compositional bias: polar residues. Phosphoserine is present on residues S361 and S372. The tract at residues P385–Q407 is disordered. S421 is modified (phosphoserine). Disordered stretches follow at residues S448–D485 and N508–R527. Residues S515, S579, S607, and S619 each carry the phosphoserine modification. At T652 the chain carries Phosphothreonine. 3 positions are modified to phosphoserine: S655, S658, and S673. Positions D684–R804 constitute a PH domain. The segment at K827 to G848 is disordered. Residue K850 forms a Glycyl lysine isopeptide (Lys-Gly) (interchain with G-Cter in SUMO2) linkage. Disordered stretches follow at residues R860–P879, F1093–P1150, K1171–P1361, and E1419–L1469. One can recognise a Rho-GAP domain in the interval I901–F1093. Basic and acidic residues predominate over residues K1099–P1110. Polar residues-rich tracts occupy residues G1133–S1144 and S1236–D1248. Positions G1338–P1351 are enriched in low complexity. The segment covering S1440–S1457 has biased composition (polar residues).

Functionally, GTPase activator for the Rho-type GTPases by converting them to an inactive GDP-bound state. This is Rho GTPase-activating protein 23 (Arhgap23) from Mus musculus (Mouse).